Consider the following 675-residue polypeptide: Methionine--tRNA ligase (675 aa).

Positions 15-25 match the 'HIGH' region motif; it reads PYANGPIHLGH. Residues Cys146, Cys149, Cys159, and Cys162 each contribute to the Zn(2+) site. A 'KMSKS' region motif is present at residues 332-336; that stretch reads KMSKS. Residue Lys335 participates in ATP binding. The tRNA-binding domain maps to 574-675; sequence DFAKIDLRVA…AGAKPGMRVK (102 aa).

The protein belongs to the class-I aminoacyl-tRNA synthetase family. MetG type 1 subfamily. Homodimer. The cofactor is Zn(2+).

It localises to the cytoplasm. It carries out the reaction tRNA(Met) + L-methionine + ATP = L-methionyl-tRNA(Met) + AMP + diphosphate. Is required not only for elongation of protein synthesis but also for the initiation of all mRNA translation through initiator tRNA(fMet) aminoacylation. This Shewanella amazonensis (strain ATCC BAA-1098 / SB2B) protein is Methionine--tRNA ligase.